A 614-amino-acid polypeptide reads, in one-letter code: Chaperone protein HtpG (614 aa).

Residues 1-324 (MSQIETKEFQ…SEELPLNISR (324 aa)) are a; substrate-binding. The interval 325-537 (ETMQDSALIA…SHYGTHSMQR (213 aa)) is b. Residues 538–614 (MMQLMNRDLQ…LNEILEKALR (77 aa)) form a c region.

It belongs to the heat shock protein 90 family. Homodimer.

It is found in the cytoplasm. In terms of biological role, molecular chaperone. Has ATPase activity. The sequence is that of Chaperone protein HtpG from Desulfitobacterium hafniense (strain Y51).